We begin with the raw amino-acid sequence, 89 residues long: Large ribosomal subunit protein eL34 (89 aa).

The interval 41 to 69 (RPLNGVPRGRPSELRKLPKTAKRPERPYP) is disordered. Over residues 50–66 (RPSELRKLPKTAKRPER) the composition is skewed to basic and acidic residues.

It belongs to the eukaryotic ribosomal protein eL34 family.

The sequence is that of Large ribosomal subunit protein eL34 from Thermococcus gammatolerans (strain DSM 15229 / JCM 11827 / EJ3).